The sequence spans 46 residues: Esculentin-1R (46 aa).

The cysteines at positions 40 and 46 are disulfide-linked.

As to expression, expressed by the skin glands.

The protein localises to the secreted. Shows antibacterial activity against representative Gram-negative and Gram-positive bacterial species, and hemolytic activity. This chain is Esculentin-1R, found in Pelophylax ridibundus (Marsh frog).